Reading from the N-terminus, the 71-residue chain is Small ribosomal subunit protein bS21 (71 aa).

Belongs to the bacterial ribosomal protein bS21 family.

The polypeptide is Small ribosomal subunit protein bS21 (Cellvibrio japonicus (strain Ueda107) (Pseudomonas fluorescens subsp. cellulosa)).